We begin with the raw amino-acid sequence, 298 residues long: N-acetylmuramic acid 6-phosphate etherase (298 aa).

An SIS domain is found at 57–220 (IAAAFGKGGR…STGAMIRTGK (164 aa)). Glutamate 85 acts as the Proton donor in catalysis. Glutamate 116 is a catalytic residue.

It belongs to the GCKR-like family. MurNAc-6-P etherase subfamily. In terms of assembly, homodimer.

It catalyses the reaction N-acetyl-D-muramate 6-phosphate + H2O = N-acetyl-D-glucosamine 6-phosphate + (R)-lactate. It functions in the pathway amino-sugar metabolism; 1,6-anhydro-N-acetylmuramate degradation. The protein operates within amino-sugar metabolism; N-acetylmuramate degradation. It participates in cell wall biogenesis; peptidoglycan recycling. Its function is as follows. Specifically catalyzes the cleavage of the D-lactyl ether substituent of MurNAc 6-phosphate, producing GlcNAc 6-phosphate and D-lactate. Together with AnmK, is also required for the utilization of anhydro-N-acetylmuramic acid (anhMurNAc) either imported from the medium or derived from its own cell wall murein, and thus plays a role in cell wall recycling. The sequence is that of N-acetylmuramic acid 6-phosphate etherase from Aeromonas hydrophila subsp. hydrophila (strain ATCC 7966 / DSM 30187 / BCRC 13018 / CCUG 14551 / JCM 1027 / KCTC 2358 / NCIMB 9240 / NCTC 8049).